The primary structure comprises 1411 residues: MSGKPAARQGDMTQYGGSIVQGSAGVRIGAPTGVACSVCPGGVTSGHPVNPLLGAKVLPGETDIALPGPLPFILSRTYSSYRTKTPAPVGSLGPGWKMPADIRLQLRDNTLILSDNGGRSLYFEHLFPGEDGYSRSESLWLVRGGVAKLDEGHRLAALWQALPEELRLSPHRYLATNSPQGPWWLLGWCERVPEADEVLPAPLPPYRVLTGLVDRFGRTQTFHREAAGEFSGEITGVTDGAWRHFRLVLTTQAQRAEEARQQAISGGTEPSAFPDTLPGYTEYGRDNGIRLSAVWLTHDPEYPENLPAAPLVRYGWTPRGELAVVYDRSGKQVRSFTYDDKYRGRMVAHRHTGRPEIRYRYDSDGRVTEQLNPAGLSYTYQYEKDRITITDSLDRREVLHTQGEAGLKRVVKKEHADGSVTQSQFDAVGRLRAQTDAAGRTTEYSPDVVTGLITRITTPDGRASAFYYNHHNQLTSATGPDGLELRREYDELGRLIQETAPDGDITRYRYDNPHSDLPCATEDATGSRKTMTWSRYGQLLSFTDCSGYVTRYDHDRFGQMTAVHREEGLSQYRAYDSRGQLIAVKDTQGHETRYEYNIAGDLTAVIAPDGSRNGTQYDAWGKAVRTTQGGLTRSMEYDAAGRVIRLTSENGSHTTFRYDVLDRLIQETGFDGRTQRYHHDLTGKLIRSEDEGLVTHWHYDEADRLTHRTVKGETAERWQYDERGWLTDISHISEGHRVAVHYRYDEKGRLTGERQTVHHPQTEALLWQHETRHAYNAQGLANRCIPDSLPAVEWLTYGSGYLAGMKLGDTPLVEYTRDRLHRETLRSFGRYELTTAYTPAGQLQSQHLNSLLSDRDYTWNDNGELIRISSPRQTRSYSYSTTGRLTGVHTTAANLDIRIPYATDPAGNRLPDPELHPDSTLSMWPDNRIARDAHYLYRYDRHGRLTEKTDLIPEGVIRTDDERTHRYHYDSQHRLVHYTRTQYEEPLVESRYLYDPLGRRVAKRVWRRERDLTGWMSLSRKPQVTWYGWDGDRLTTIQNDRSRIQTIYQPGSFTPLIRVETATGELAKTQRRSLADALQQSGGEDGGSVVFPPVLVQMLDRLESEILADRVSEESRRWLASCGLTVEQMQNQMDPVYTPARKIHLYHCDHRGLPLALISTEGATAWCAEYDEWGNLLNEENPHQLQQLIRLPGQQYDEESGLYYNRHRYYDPLQGRYITQDPIGLKGGWNLYGYQLNPISDIDPLGLSMWEDAKSGACTNGLCGTLSAMIGPDKFDSIDSTAYDALNKINSQSICEDKEFAGLICKDNSGRYFSTAPNRGERKGSYPFNSPCPNGTEKVSAYHTHGADSHGEYWDEIFSGKDEKIVKSKDNNIKSFYLGTPSGNFKAIDNHGKEITNRKGLPNVCRVHGNM.

28 consecutive repeat copies span residues 330-352 (GKQVRSFTYDDKYRGRMVAHRHT), 353-374 (GRPEIRYRYDSDGRVTEQLNPA), 375-417 (GLSY…EHAD), 418-438 (GSVTQSQFDAVGRLRAQTDAA), 439-460 (GRTTEYSPDVVTGLITRITTPD), 461-481 (GRASAFYYNHHNQLTSATGPD), 482-502 (GLELRREYDELGRLIQETAPD), 503-525 (GDITRYRYDNPHSDLPCATEDAT), 526-546 (GSRKTMTWSRYGQLLSFTDCS), 547-567 (GYVTRYDHDRFGQMTAVHREE), 568-588 (GLSQYRAYDSRGQLIAVKDTQ), 589-609 (GHETRYEYNIAGDLTAVIAPD), 610-629 (GSRNGTQYDAWGKAVRTTQG), 630-650 (GLTRSMEYDAAGRVIRLTSEN), 651-671 (GSHTTFRYDVLDRLIQETGFD), 672-691 (GRTQRYHHDLTGKLIRSEDE), 692-711 (GLVTHWHYDEADRLTHRTVK), 712-734 (GETAERWQYDERGWLTDISHISE), 735-758 (GHRVAVHYRYDEKGRLTGERQTVH), 808-828 (GDTPLVEYTRDRLHRETLRSF), 829-850 (GRYELTTAYTPAGQLQSQHLNS), 851-871 (LLSDRDYTWNDNGELIRISSP), 872-894 (RQTRSYSYSTTGRLTGVHTTAAN), 895-930 (LDIRIPYATDPAGNRLPDPELHPDSTLSMWPDNRIA), 931-959 (RDAHYLYRYDRHGRLTEKTDLIPEGVIRT), 960-984 (DDERTHRYHYDSQHRLVHYTRTQYE), 985-1019 (EPLVESRYLYDPLGRRVAKRVWRRERDLTGWMSLS), and 1162-1186 (GATAWCAEYDEWGNLLNEENPHQLQ). The segment at 330–1186 (GKQVRSFTYD…LNEENPHQLQ (857 aa)) is 28 X approximate tandem repeats.

Belongs to the RHS family.

In terms of biological role, rhs elements have a nonessential function. They may play an important role in the natural ecology of the cell. The protein is Protein RhsB (rhsB) of Escherichia coli (strain K12).